We begin with the raw amino-acid sequence, 539 residues long: Aluminum-activated malate transporter 13 (539 aa).

The next 6 helical transmembrane spans lie at 57–77, 80–100, 107–127, 130–150, 165–185, and 192–212; these read VGVA…FEGV, NALW…GATL, GLGT…AIHS, ILGG…ITYM, LVFL…DTVI, and LYTI…FFPI.

It belongs to the aromatic acid exporter (TC 2.A.85) family.

It localises to the membrane. In terms of biological role, malate transporter. The chain is Aluminum-activated malate transporter 13 (ALMT13) from Arabidopsis thaliana (Mouse-ear cress).